Reading from the N-terminus, the 413-residue chain is 1-deoxy-D-xylulose 5-phosphate reductoisomerase (413 aa).

NADPH is bound by residues threonine 13, glycine 14, serine 15, isoleucine 16, arginine 40, asparagine 41, and asparagine 127. Lysine 128 lines the 1-deoxy-D-xylulose 5-phosphate pocket. Glutamate 129 lines the NADPH pocket. Position 153 (aspartate 153) interacts with Mn(2+). Positions 154, 155, 184, and 207 each coordinate 1-deoxy-D-xylulose 5-phosphate. Mn(2+) is bound at residue glutamate 155. Glycine 213 is an NADPH binding site. 4 residues coordinate 1-deoxy-D-xylulose 5-phosphate: serine 220, asparagine 225, lysine 226, and glutamate 229. Glutamate 229 provides a ligand contact to Mn(2+).

The protein belongs to the DXR family. Requires Mg(2+) as cofactor. Mn(2+) serves as cofactor.

It catalyses the reaction 2-C-methyl-D-erythritol 4-phosphate + NADP(+) = 1-deoxy-D-xylulose 5-phosphate + NADPH + H(+). The protein operates within isoprenoid biosynthesis; isopentenyl diphosphate biosynthesis via DXP pathway; isopentenyl diphosphate from 1-deoxy-D-xylulose 5-phosphate: step 1/6. Functionally, catalyzes the NADPH-dependent rearrangement and reduction of 1-deoxy-D-xylulose-5-phosphate (DXP) to 2-C-methyl-D-erythritol 4-phosphate (MEP). This chain is 1-deoxy-D-xylulose 5-phosphate reductoisomerase, found in Nitrosomonas europaea (strain ATCC 19718 / CIP 103999 / KCTC 2705 / NBRC 14298).